A 768-amino-acid chain; its full sequence is uncharacterized protein (768 aa).

It to E.coli YkiA.

This is an uncharacterized protein from Escherichia coli (strain K12).